A 442-amino-acid chain; its full sequence is C4-dicarboxylate transport protein (442 aa).

8 helical membrane-spanning segments follow: residues 10–30, 40–60, 77–97, 149–169, 185–205, 221–241, 288–308, and 354–374; these read VQVLIAIVLGILVGFLFPSFG, FIKLIKMLIAPIIFATVVSGI, LIYFEVVTTFALVIGLVVANI, LLQVLLISVLFGFALTQLGTL, FVILGFVMRLAPIGAFGAMAF, LMVAFYATCLLFVFVVLGLIA, VVGLVVPAGYSFNLDGTSIYL, and AATLSAVGHVPVAGLALILGI. Residues 420–442 form a disordered region; the sequence is PATPEVAAEERGEGRGLDGPLPA.

The protein belongs to the dicarboxylate/amino acid:cation symporter (DAACS) (TC 2.A.23) family.

It localises to the cell membrane. Its function is as follows. Responsible for the transport of dicarboxylates such as succinate, fumarate, and malate across the membrane. This chain is C4-dicarboxylate transport protein, found in Deinococcus geothermalis (strain DSM 11300 / CIP 105573 / AG-3a).